The sequence spans 146 residues: Deoxyuridine 5'-triphosphate nucleotidohydrolase (146 aa).

Residues arginine 66 to glycine 68, asparagine 79, threonine 83 to aspartate 85, and lysine 93 contribute to the substrate site.

Belongs to the dUTPase family. Mg(2+) is required as a cofactor.

It catalyses the reaction dUTP + H2O = dUMP + diphosphate + H(+). It participates in pyrimidine metabolism; dUMP biosynthesis; dUMP from dCTP (dUTP route): step 2/2. Functionally, this enzyme is involved in nucleotide metabolism: it produces dUMP, the immediate precursor of thymidine nucleotides and it decreases the intracellular concentration of dUTP so that uracil cannot be incorporated into DNA. In Zymomonas mobilis subsp. mobilis (strain ATCC 31821 / ZM4 / CP4), this protein is Deoxyuridine 5'-triphosphate nucleotidohydrolase.